An 819-amino-acid polypeptide reads, in one-letter code: DNA topoisomerase 4 subunit A (819 aa).

The region spanning 30–496 is the Topo IIA-type catalytic domain; that stretch reads LPDIRDGLKP…QIIEIDTASL (467 aa). The active-site O-(5'-phospho-DNA)-tyrosine intermediate is Y118.

This sequence belongs to the type II topoisomerase GyrA/ParC subunit family. ParC type 2 subfamily. As to quaternary structure, heterotetramer composed of ParC and ParE.

It localises to the cell membrane. It carries out the reaction ATP-dependent breakage, passage and rejoining of double-stranded DNA.. Topoisomerase IV is essential for chromosome segregation. It relaxes supercoiled DNA. Performs the decatenation events required during the replication of a circular DNA molecule. The sequence is that of DNA topoisomerase 4 subunit A from Streptococcus pyogenes serotype M3 (strain ATCC BAA-595 / MGAS315).